The following is a 147-amino-acid chain: Cyanate hydratase (147 aa).

Residues Arg88, Glu91, and Ser114 contribute to the active site.

This sequence belongs to the cyanase family.

The catalysed reaction is cyanate + hydrogencarbonate + 3 H(+) = NH4(+) + 2 CO2. Functionally, catalyzes the reaction of cyanate with bicarbonate to produce ammonia and carbon dioxide. This chain is Cyanate hydratase, found in Dechloromonas aromatica (strain RCB).